Consider the following 295-residue polypeptide: Probable dTDP-4,6-dihydroxy-2-methyloxan-3-one 4-ketoreductase (295 aa).

NADH-binding positions include 10 to 12 (GML), 36 to 37 (DV), 60 to 62 (AYT), tyrosine 126, and lysine 130. NADPH is bound by residues 11–12 (ML), 36–37 (DV), 60–62 (AYT), tyrosine 126, and lysine 130. Tyrosine 126 acts as the Proton donor/acceptor in catalysis.

It belongs to the dTDP-4-dehydrorhamnose reductase family. It depends on Mg(2+) as a cofactor.

The protein operates within antibiotic biosynthesis. Its function is as follows. Involved in the biosynthesis of one of the two 2,6-deoxysugars, dTDP-L-oleandrose, attached to the macrolactone ring oleandolide to produce the aglycone antibiotic oleandomycin. Probably catalyzes the reduction of dTDP-4-keto-2,6-dideoxy-beta-L-galactose to yield dTDP-L-olivose. The sequence is that of Probable dTDP-4,6-dihydroxy-2-methyloxan-3-one 4-ketoreductase from Streptomyces antibioticus.